Here is a 331-residue protein sequence, read N- to C-terminus: UDP-GalNAc:beta-1,3-N-acetylgalactosaminyltransferase 1 (331 aa).

Residues 1–20 (MASALWTVLPSRMSLRSLQW) are Cytoplasmic-facing. A helical; Signal-anchor for type II membrane protein membrane pass occupies residues 21–43 (SLLLLSLLSFLVMWYLSLPHYNV). Residues 44–331 (IERVNWMYFY…VMLRNTTCHY (288 aa)) lie on the Lumenal side of the membrane. Asn-72, Asn-154, Asn-198, Asn-212, and Asn-326 each carry an N-linked (GlcNAc...) asparagine glycan.

Belongs to the glycosyltransferase 31 family. The cofactor is Mg(2+).

It is found in the golgi apparatus membrane. It catalyses the reaction a globoside Gb3Cer (d18:1(4E)) + UDP-N-acetyl-alpha-D-galactosamine = a globoside Gb4Cer (d18:1(4E)) + UDP + H(+). The protein operates within protein modification; protein glycosylation. Transfers N-acetylgalactosamine onto globotriaosylceramide. Plays a critical role in preimplantation stage embryonic development. The protein is UDP-GalNAc:beta-1,3-N-acetylgalactosaminyltransferase 1 (B3GALNT1) of Pongo abelii (Sumatran orangutan).